The following is a 44-amino-acid chain: MANPTGNQPVSYPIFTVRWLAVHTLAVPTVFFIGAIAAMQFIQR.

A helical transmembrane segment spans residues 19–35 (WLAVHTLAVPTVFFIGA). His-23 is a heme binding site.

The protein belongs to the PsbE/PsbF family. Heterodimer of an alpha subunit and a beta subunit. PSII is composed of 1 copy each of membrane proteins PsbA, PsbB, PsbC, PsbD, PsbE, PsbF, PsbH, PsbI, PsbJ, PsbK, PsbL, PsbM, PsbT, PsbX, PsbY, PsbZ, Psb30/Ycf12, peripheral proteins PsbO, CyanoQ (PsbQ), PsbU, PsbV and a large number of cofactors. It forms dimeric complexes. Heme b serves as cofactor.

Its subcellular location is the cellular thylakoid membrane. This b-type cytochrome is tightly associated with the reaction center of photosystem II (PSII). PSII is a light-driven water:plastoquinone oxidoreductase that uses light energy to abstract electrons from H(2)O, generating O(2) and a proton gradient subsequently used for ATP formation. It consists of a core antenna complex that captures photons, and an electron transfer chain that converts photonic excitation into a charge separation. The chain is Cytochrome b559 subunit beta from Gloeothece citriformis (strain PCC 7424) (Cyanothece sp. (strain PCC 7424)).